Reading from the N-terminus, the 552-residue chain is Cytochrome P450 97B1, chloroplastic (552 aa).

Residues 1-52 (MVAAPISTVKLTDANLHTRFHSSSSSTPSTLSLPLSLHFHFSSHSKRFSSIR) constitute a chloroplast transit peptide. Cysteine 528 provides a ligand contact to heme.

It belongs to the cytochrome P450 family. Heme serves as cofactor.

The protein resides in the plastid. It is found in the chloroplast membrane. This Pisum sativum (Garden pea) protein is Cytochrome P450 97B1, chloroplastic (CYP97B1).